A 380-amino-acid chain; its full sequence is Queuine tRNA-ribosyltransferase (380 aa).

D96 functions as the Proton acceptor in the catalytic mechanism. Substrate contacts are provided by residues D96–F100, D150, Q193, and G220. Residues G251–S257 form an RNA binding region. The active-site Nucleophile is the D270. An RNA binding; important for wobble base 34 recognition region spans residues T275–R279. Residues C308, C310, C313, and H339 each contribute to the Zn(2+) site.

It belongs to the queuine tRNA-ribosyltransferase family. As to quaternary structure, homodimer. Within each dimer, one monomer is responsible for RNA recognition and catalysis, while the other monomer binds to the replacement base PreQ1. Zn(2+) is required as a cofactor.

The enzyme catalyses 7-aminomethyl-7-carbaguanine + guanosine(34) in tRNA = 7-aminomethyl-7-carbaguanosine(34) in tRNA + guanine. The protein operates within tRNA modification; tRNA-queuosine biosynthesis. In terms of biological role, catalyzes the base-exchange of a guanine (G) residue with the queuine precursor 7-aminomethyl-7-deazaguanine (PreQ1) at position 34 (anticodon wobble position) in tRNAs with GU(N) anticodons (tRNA-Asp, -Asn, -His and -Tyr). Catalysis occurs through a double-displacement mechanism. The nucleophile active site attacks the C1' of nucleotide 34 to detach the guanine base from the RNA, forming a covalent enzyme-RNA intermediate. The proton acceptor active site deprotonates the incoming PreQ1, allowing a nucleophilic attack on the C1' of the ribose to form the product. After dissociation, two additional enzymatic reactions on the tRNA convert PreQ1 to queuine (Q), resulting in the hypermodified nucleoside queuosine (7-(((4,5-cis-dihydroxy-2-cyclopenten-1-yl)amino)methyl)-7-deazaguanosine). This Streptococcus pyogenes serotype M3 (strain ATCC BAA-595 / MGAS315) protein is Queuine tRNA-ribosyltransferase.